Here is a 302-residue protein sequence, read N- to C-terminus: AT-hook motif nuclear-localized protein 29 (302 aa).

The interval 1-95 (MDGGYDQSGG…KPPVIVTRDS (95 aa)) is disordered. Positions 32–44 (QLHPLPQPQPQPQ) are enriched in pro residues. Residues 72–84 (KRPRGRPPGSKNK) constitute a DNA-binding region (a.T hook). The region spanning 96–241 (PNVLRSHVLE…DEGGEGGEGG (146 aa)) is the PPC domain. Positions 164-169 (GRFEIL) are required for the binding to non-AHL interactors. The segment at 229–279 (PLEDEGGEGGEGGEVGEGGGGEGGPPPATSSSPPSGAGQGQLRGNMSGYDQ) is disordered. Over residues 237-251 (GGEGGEVGEGGGGEG) the composition is skewed to gly residues.

As to quaternary structure, homodimer. Interacts with AHL5, AHL12, AHL25, AHL27, TCP4, TCP13 and EF114. In terms of tissue distribution, expressed in the hypocotyl and the vascular tissue of seedling.

It localises to the nucleus. Its function is as follows. Transcription factor that specifically binds AT-rich DNA sequences related to the nuclear matrix attachment regions (MARs). Acts redundantly with AHL18, AHL22 and AHL27 in the regulation of flowering and regulation of the hypocotyl elongation. Acts redundantly with AHL27/ESC to modulate hypocotyl growth inhibition in response to light. In Arabidopsis thaliana (Mouse-ear cress), this protein is AT-hook motif nuclear-localized protein 29.